The primary structure comprises 266 residues: MLAKRIIPCLDVTGGRVVKGVNFVELRDAGDPVEIAARYNDQGADELTFLDITATSDGRDLILHIIEAVASQVFIPLTVGGGVRTVDDVRRLLNAGADKTSFNSAAIANPQVIRDASRKYGAQCIVVAIDAKRRLATDVGRLDANGQAVGEGWDVYSHGGRKNTGLDAVIWARLMAELGAGEILLTSMDRDGTKAGFDLALTRAVSDAVSVPVIASGGVGTLDHLADGIQIGGADAVLAASIFHYGEFTVAQAKAHMAARGIPVRI.

Active-site residues include D11 and D130.

Belongs to the HisA/HisF family. Heterodimer of HisH and HisF.

It localises to the cytoplasm. It catalyses the reaction 5-[(5-phospho-1-deoxy-D-ribulos-1-ylimino)methylamino]-1-(5-phospho-beta-D-ribosyl)imidazole-4-carboxamide + L-glutamine = D-erythro-1-(imidazol-4-yl)glycerol 3-phosphate + 5-amino-1-(5-phospho-beta-D-ribosyl)imidazole-4-carboxamide + L-glutamate + H(+). The protein operates within amino-acid biosynthesis; L-histidine biosynthesis; L-histidine from 5-phospho-alpha-D-ribose 1-diphosphate: step 5/9. In terms of biological role, IGPS catalyzes the conversion of PRFAR and glutamine to IGP, AICAR and glutamate. The HisF subunit catalyzes the cyclization activity that produces IGP and AICAR from PRFAR using the ammonia provided by the HisH subunit. The protein is Imidazole glycerol phosphate synthase subunit HisF of Albidiferax ferrireducens (strain ATCC BAA-621 / DSM 15236 / T118) (Rhodoferax ferrireducens).